The primary structure comprises 186 residues: Riboflavin kinase (186 aa).

Mg(2+)-binding residues include Thr42 and Asn44. Catalysis depends on Glu123, which acts as the Nucleophile.

This sequence belongs to the flavokinase family. The cofactor is Zn(2+). Mg(2+) serves as cofactor.

The catalysed reaction is riboflavin + ATP = FMN + ADP + H(+). Its pathway is cofactor biosynthesis; FMN biosynthesis; FMN from riboflavin (ATP route): step 1/1. In terms of biological role, catalyzes the phosphorylation of riboflavin (vitamin B2) to form flavin mononucleotide (FMN) coenzyme. The polypeptide is Riboflavin kinase (FMN1) (Eremothecium gossypii (strain ATCC 10895 / CBS 109.51 / FGSC 9923 / NRRL Y-1056) (Yeast)).